Reading from the N-terminus, the 185-residue chain is C-phycoerythrin beta chain (185 aa).

(2R,3E)-phycoerythrobilin is bound by residues Cys49 and Cys60. Asn71 carries the post-translational modification N4-methylasparagine. Positions 81 and 166 each coordinate (2R,3E)-phycoerythrobilin.

Belongs to the phycobiliprotein family. As to quaternary structure, heterodimer of an alpha and a beta chain. Contains three covalently linked bilin chromophores.

It is found in the cellular thylakoid membrane. In terms of biological role, light-harvesting photosynthetic bile pigment-protein from the phycobiliprotein complex. The sequence is that of C-phycoerythrin beta chain (cpeB) from Pseudanabaena tenuis (strain PCC 7409).